Here is a 406-residue protein sequence, read N- to C-terminus: Phosphopentomutase (406 aa).

Residues aspartate 10, aspartate 305, histidine 310, aspartate 346, histidine 347, and histidine 358 each coordinate Mn(2+).

The protein belongs to the phosphopentomutase family. Mn(2+) is required as a cofactor.

Its subcellular location is the cytoplasm. The catalysed reaction is 2-deoxy-alpha-D-ribose 1-phosphate = 2-deoxy-D-ribose 5-phosphate. The enzyme catalyses alpha-D-ribose 1-phosphate = D-ribose 5-phosphate. It functions in the pathway carbohydrate degradation; 2-deoxy-D-ribose 1-phosphate degradation; D-glyceraldehyde 3-phosphate and acetaldehyde from 2-deoxy-alpha-D-ribose 1-phosphate: step 1/2. In terms of biological role, isomerase that catalyzes the conversion of deoxy-ribose 1-phosphate (dRib-1-P) and ribose 1-phosphate (Rib-1-P) to deoxy-ribose 5-phosphate (dRib-5-P) and ribose 5-phosphate (Rib-5-P), respectively. The protein is Phosphopentomutase of Rhizobium meliloti (strain 1021) (Ensifer meliloti).